A 1411-amino-acid chain; its full sequence is DNA-directed RNA polymerase subunit beta' (1411 aa).

C70, C72, C85, and C88 together coordinate Zn(2+). Positions 458, 460, and 462 each coordinate Mg(2+). Residues C813, C887, C894, and C897 each coordinate Zn(2+). A disordered region spans residues 1391-1411 (AQAEVPELDGSSVTASDAAAD).

This sequence belongs to the RNA polymerase beta' chain family. The RNAP catalytic core consists of 2 alpha, 1 beta, 1 beta' and 1 omega subunit. When a sigma factor is associated with the core the holoenzyme is formed, which can initiate transcription. The cofactor is Mg(2+). Zn(2+) serves as cofactor.

The enzyme catalyses RNA(n) + a ribonucleoside 5'-triphosphate = RNA(n+1) + diphosphate. In terms of biological role, DNA-dependent RNA polymerase catalyzes the transcription of DNA into RNA using the four ribonucleoside triphosphates as substrates. The protein is DNA-directed RNA polymerase subunit beta' of Verminephrobacter eiseniae (strain EF01-2).